The following is a 309-amino-acid chain: 4-hydroxy-3-methylbut-2-enyl diphosphate reductase (309 aa).

Cysteine 12 is a binding site for [4Fe-4S] cluster. Residues histidine 41 and histidine 74 each coordinate (2E)-4-hydroxy-3-methylbut-2-enyl diphosphate. Dimethylallyl diphosphate is bound by residues histidine 41 and histidine 74. Isopentenyl diphosphate is bound by residues histidine 41 and histidine 74. Cysteine 96 contributes to the [4Fe-4S] cluster binding site. Histidine 124 contributes to the (2E)-4-hydroxy-3-methylbut-2-enyl diphosphate binding site. Histidine 124 lines the dimethylallyl diphosphate pocket. Isopentenyl diphosphate is bound at residue histidine 124. Catalysis depends on glutamate 126, which acts as the Proton donor. Threonine 167 contacts (2E)-4-hydroxy-3-methylbut-2-enyl diphosphate. Residue cysteine 197 participates in [4Fe-4S] cluster binding. 4 residues coordinate (2E)-4-hydroxy-3-methylbut-2-enyl diphosphate: serine 225, serine 226, asparagine 227, and serine 269. Dimethylallyl diphosphate is bound by residues serine 225, serine 226, asparagine 227, and serine 269. Residues serine 225, serine 226, asparagine 227, and serine 269 each contribute to the isopentenyl diphosphate site.

Belongs to the IspH family. [4Fe-4S] cluster is required as a cofactor.

The enzyme catalyses isopentenyl diphosphate + 2 oxidized [2Fe-2S]-[ferredoxin] + H2O = (2E)-4-hydroxy-3-methylbut-2-enyl diphosphate + 2 reduced [2Fe-2S]-[ferredoxin] + 2 H(+). The catalysed reaction is dimethylallyl diphosphate + 2 oxidized [2Fe-2S]-[ferredoxin] + H2O = (2E)-4-hydroxy-3-methylbut-2-enyl diphosphate + 2 reduced [2Fe-2S]-[ferredoxin] + 2 H(+). It functions in the pathway isoprenoid biosynthesis; dimethylallyl diphosphate biosynthesis; dimethylallyl diphosphate from (2E)-4-hydroxy-3-methylbutenyl diphosphate: step 1/1. It participates in isoprenoid biosynthesis; isopentenyl diphosphate biosynthesis via DXP pathway; isopentenyl diphosphate from 1-deoxy-D-xylulose 5-phosphate: step 6/6. Catalyzes the conversion of 1-hydroxy-2-methyl-2-(E)-butenyl 4-diphosphate (HMBPP) into a mixture of isopentenyl diphosphate (IPP) and dimethylallyl diphosphate (DMAPP). Acts in the terminal step of the DOXP/MEP pathway for isoprenoid precursor biosynthesis. This chain is 4-hydroxy-3-methylbut-2-enyl diphosphate reductase, found in Colwellia psychrerythraea (strain 34H / ATCC BAA-681) (Vibrio psychroerythus).